A 413-amino-acid chain; its full sequence is Divalent metal cation transporter MntH (413 aa).

11 helical membrane-spanning segments follow: residues 19–39 (LALM…GNFA), 46–66 (ASFG…AMLI), 94–114 (VWFY…AEFI), 122–142 (LVLG…TFLI), 156–176 (VIGG…IFSQ), 196–216 (AVFL…IYLH), 241–261 (IAMT…AAAF), 290–310 (IFGL…TLAG), 329–349 (AITM…TRIL), 350–370 (VMSQ…LLIF), and 389–409 (IGWA…VGSL).

This sequence belongs to the NRAMP family.

The protein resides in the cell inner membrane. In terms of biological role, h(+)-stimulated, divalent metal cation uptake system. This chain is Divalent metal cation transporter MntH, found in Klebsiella pneumoniae subsp. pneumoniae (strain ATCC 700721 / MGH 78578).